The chain runs to 626 residues: Lysine--tRNA ligase, cytoplasmic (626 aa).

Position 1 is an N-acetylmethionine (M1). Polar residues-rich tracts occupy residues 1-11 and 18-27; these read MEGAADQTTKA and DSSTTLNAAE. Residues 1 to 84 form a disordered region; sequence MEGAADQTTK…QKAVAADDEE (84 aa). The stretch at 37 to 69 forms a coiled coil; that stretch reads RSKNALKKEQKMKQKEEEKRRKDEEKAEKAKQA. Residues 42–67 are compositionally biased toward basic and acidic residues; sequence LKKEQKMKQKEEEKRRKDEEKAEKAK. Residues 69-78 show a composition bias toward low complexity; it reads APKASSQKAV. Positions 141-217 form a DNA-binding region, OB; that stretch reads SLAGRIMSKR…RGELSIFPRS (77 aa). Residues G313 and E337 each coordinate substrate. Residues 359–361 and 367–368 contribute to the ATP site; these read RNE and HN. Positions 375 and 377 each coordinate substrate. Residues E521 and E528 each contribute to the Ca(2+) site. 528-529 is a binding site for ATP; it reads EL. Residues N531 and E535 each contribute to the substrate site. Residue 584–587 coordinates ATP; sequence GIDR.

This sequence belongs to the class-II aminoacyl-tRNA synthetase family. It depends on Ca(2+) as a cofactor.

It is found in the cytoplasm. The protein resides in the cytosol. The catalysed reaction is tRNA(Lys) + L-lysine + ATP = L-lysyl-tRNA(Lys) + AMP + diphosphate. Functionally, catalyzes the specific attachment of an amino acid to its cognate tRNA in a 2 step reaction: the amino acid (AA) is first activated by ATP to form AA-AMP and then transferred to the acceptor end of the tRNA. Promotes aminoacylation of non-cognate tRNAs and translational recoding of lysine at nonsense codons. This Arabidopsis thaliana (Mouse-ear cress) protein is Lysine--tRNA ligase, cytoplasmic.